Consider the following 154-residue polypeptide: MTKQVEIFTDGSCLGNPGPGGYGAILRYKQHEKTFSAGYYLTTNNRMELMAAIVALEALTSPCEVTLSTDSQYVRQGITQWIHNWKKRGWKTADRKPVRNVDLWQRLDLAIQSHTIQWEWVKGHAGHPENERCDELARQGANSPTLDDTGYNPD.

The RNase H type-1 domain maps to 1 to 142 (MTKQVEIFTD…CDELARQGAN (142 aa)). Residues D10, E48, D70, and D134 each contribute to the Mg(2+) site.

The protein belongs to the RNase H family. As to quaternary structure, monomer. Requires Mg(2+) as cofactor.

It localises to the cytoplasm. It catalyses the reaction Endonucleolytic cleavage to 5'-phosphomonoester.. In terms of biological role, endonuclease that specifically degrades the RNA of RNA-DNA hybrids. The protein is Ribonuclease H of Yersinia pestis bv. Antiqua (strain Antiqua).